The primary structure comprises 103 residues: Large ribosomal subunit protein bL21 (103 aa).

The protein belongs to the bacterial ribosomal protein bL21 family. In terms of assembly, part of the 50S ribosomal subunit. Contacts protein L20.

Functionally, this protein binds to 23S rRNA in the presence of protein L20. This is Large ribosomal subunit protein bL21 from Shigella sonnei (strain Ss046).